The primary structure comprises 365 residues: NAD(P)H-quinone oxidoreductase subunit 1, chloroplastic (365 aa).

6 helical membrane passes run 29 to 49 (IWLLVPIFTLILVIIIGVLVI), 106 to 126 (IAVISTLLSYLVIPFGYHLVL), 129 to 149 (LSIGVFLWIAISSIAPIGLLM), 250 to 270 (YSGIKFGLFYVASYLNLLVSS), 302 to 322 (IFGMTIGILITLAKAYLFLFI), and 338 to 358 (LLNLGWKFLLPISLGNLLLTT).

Belongs to the complex I subunit 1 family. NDH is composed of at least 16 different subunits, 5 of which are encoded in the nucleus.

It localises to the plastid. It is found in the chloroplast thylakoid membrane. It catalyses the reaction a plastoquinone + NADH + (n+1) H(+)(in) = a plastoquinol + NAD(+) + n H(+)(out). It carries out the reaction a plastoquinone + NADPH + (n+1) H(+)(in) = a plastoquinol + NADP(+) + n H(+)(out). NDH shuttles electrons from NAD(P)H:plastoquinone, via FMN and iron-sulfur (Fe-S) centers, to quinones in the photosynthetic chain and possibly in a chloroplast respiratory chain. The immediate electron acceptor for the enzyme in this species is believed to be plastoquinone. Couples the redox reaction to proton translocation, and thus conserves the redox energy in a proton gradient. The chain is NAD(P)H-quinone oxidoreductase subunit 1, chloroplastic from Acorus calamus (Sweet flag).